Consider the following 417-residue polypeptide: UDP-N-acetylglucosamine 1-carboxyvinyltransferase (417 aa).

A phosphoenolpyruvate-binding site is contributed by 22-23; the sequence is KN. R92 lines the UDP-N-acetyl-alpha-D-glucosamine pocket. The active-site Proton donor is C116. The residue at position 116 (C116) is a 2-(S-cysteinyl)pyruvic acid O-phosphothioketal. The UDP-N-acetyl-alpha-D-glucosamine site is built by D304 and I326.

The protein belongs to the EPSP synthase family. MurA subfamily.

Its subcellular location is the cytoplasm. It catalyses the reaction phosphoenolpyruvate + UDP-N-acetyl-alpha-D-glucosamine = UDP-N-acetyl-3-O-(1-carboxyvinyl)-alpha-D-glucosamine + phosphate. It functions in the pathway cell wall biogenesis; peptidoglycan biosynthesis. Functionally, cell wall formation. Adds enolpyruvyl to UDP-N-acetylglucosamine. This is UDP-N-acetylglucosamine 1-carboxyvinyltransferase from Desulfosudis oleivorans (strain DSM 6200 / JCM 39069 / Hxd3) (Desulfococcus oleovorans).